The primary structure comprises 79 residues: MGMRMMFTVFLLVVLATTVVSIPSDRASDGRNAVVHERAPELVVTATTNCCGYNPMTICPPCMCTYSCPPKRKPGRRND.

A signal peptide spans 1–21 (MGMRMMFTVFLLVVLATTVVS). A propeptide spanning residues 22–38 (IPSDRASDGRNAVVHER) is cleaved from the precursor. 4-hydroxyproline is present on proline 40. Glutamate 41 carries the 4-carboxyglutamate modification. Threonine 45 and threonine 47 each carry an O-linked (HexNAc...) threonine glycan. A 4-hydroxyproline mark is found at proline 55, proline 60, proline 61, proline 69, proline 70, and proline 74. The residue at position 74 (proline 74) is a Proline amide. A propeptide spanning residues 75–79 (GRRND) is cleaved from the precursor.

Post-translationally, O-linked glycan consists of Hex4-HexNAc2 hexasaccharide. In terms of processing, contains 3 disulfide bonds. In terms of tissue distribution, expressed by the venom duct.

The protein localises to the secreted. Functionally, probable neurotoxin with ion channel inhibitor activity. This Conus magus (Magical cone) protein is Conotoxin MIVA.